Here is a 733-residue protein sequence, read N- to C-terminus: Microtubule-associated protein tau (733 aa).

Residues 1 to 16 show a composition bias toward basic and acidic residues; that stretch reads MADPRQEFDTMEDHAG. The segment at 1–548 is disordered; that stretch reads MADPRQEFDT…PVPMPDLKNV (548 aa). Ala2 bears the N-acetylalanine mark. Tyr18 carries the post-translational modification Phosphotyrosine; by FYN. Lys33 is covalently cross-linked (Glycyl lysine isopeptide (Lys-Gly) (interchain with G-Cter in ubiquitin)). Ser35 and Ser50 each carry phosphoserine. Polar residues predominate over residues 50–60; it reads SETSDAKSTPT. Phosphothreonine occurs at positions 58, 60, and 100. Arg115 carries the omega-N-methylarginine modification. The span at 126–137 shows a compositional bias: polar residues; sequence SDWTRQQVSSMS. Residues 157–172 are compositionally biased toward basic and acidic residues; that stretch reads RPEDIEKSHPASELLR. Residue Ser188 is modified to Phosphoserine. The span at 189–202 shows a compositional bias: acidic residues; the sequence is EEEVDEDLTVDESS. The segment covering 203-212 has biased composition (polar residues); that stretch reads QDSPPSQASL. 2 stretches are compositionally biased toward basic and acidic residues: residues 270–294 and 354–366; these read EEGH…KEQD and ASKD…EKKA. Polar residues predominate over residues 413-427; it reads KHVSSVTPRNGSPGT. A Phosphothreonine modification is found at Thr445. Position 447 is an omega-N-methylarginine (Arg447). Ser451 bears the Phosphoserine mark. Position 455 is an N6,N6-dimethyllysine; alternate (Lys455). Lys455 is subject to N6-acetyllysine; alternate. Phosphothreonine occurs at positions 461, 467, and 468. Ser470 is subject to Phosphoserine. At Thr473 the chain carries Phosphothreonine. Phosphoserine is present on residues Ser477, Ser483, and Ser487. Residues 479–506 are compositionally biased toward low complexity; the sequence is EPPKSGERSGYSSPGSPGTPGSRSRTPS. The residue at position 489 (Tyr489) is a Phosphotyrosine. Residues Ser490, Ser491, and Ser494 each carry the phosphoserine modification. Residues Thr497 and Thr504 each carry the phosphothreonine modification. Position 506 is a phosphoserine (Ser506). Thr509 is modified (phosphothreonine). Position 517 is an N6-acetyllysine (Lys517). The residue at position 523 (Thr523) is a Phosphothreonine. Ser527, Ser529, and Ser531 each carry phosphoserine. 4 Tau/MAP repeats span residues 536–566, 567–597, 598–628, and 629–660; these read QTAP…GGGK, VQII…GGGS, VQIV…GGGQ, and VEVK…GGGN. Lys546 is covalently cross-linked (Glycyl lysine isopeptide (Lys-Gly) (interchain with G-Cter in ubiquitin)). Lys551 is modified (N6-acetyllysine; alternate). Lys551 carries the post-translational modification N6-methyllysine; alternate. Lys551 participates in a covalent cross-link: Glycyl lysine isopeptide (Lys-Gly) (interchain with G-Cter in ubiquitin); alternate. Phosphoserine; by MARK1, BRSK1, BRSK2 and PHK is present on Ser554. Lys559 is covalently cross-linked (Glycyl lysine isopeptide (Lys-Gly) (interchain with G-Cter in ubiquitin)). Lys573 is modified (N6-acetyllysine; alternate). Lys573 participates in a covalent cross-link: Glycyl lysine isopeptide (Lys-Gly) (interchain with G-Cter in ubiquitin); alternate. 2 positions are modified to phosphoserine: Ser577 and Ser581. The residue at position 582 (Lys582) is an N6-acetyllysine. An intrachain disulfide couples Cys583 to Cys614. The residue at position 585 (Ser585) is a Phosphoserine. Residue Lys590 is modified to N6-acetyllysine; alternate. Lys590 is covalently cross-linked (Glycyl lysine isopeptide (Lys-Gly) (interchain with G-Cter in ubiquitin); alternate). Ser597 is subject to Phosphoserine. N6,N6-dimethyllysine; alternate is present on Lys603. Residues Lys603, Lys609, and Lys613 each carry the N6-acetyllysine; alternate modification. Residues Lys603, Lys609, and Lys613 each participate in a glycyl lysine isopeptide (Lys-Gly) (interchain with G-Cter in ubiquitin); alternate cross-link. Ser616 is subject to Phosphoserine. N6-acetyllysine; alternate is present on residues Lys623, Lys635, and Lys639. Residues Lys623, Lys635, and Lys639 each participate in a glycyl lysine isopeptide (Lys-Gly) (interchain with G-Cter in ubiquitin); alternate cross-link. Arg641 bears the Omega-N-methylarginine mark. At Ser644 the chain carries Phosphoserine. Lys645 participates in a covalent cross-link: Glycyl lysine isopeptide (Lys-Gly) (interchain with G-Cter in ubiquitin). Ser648 is subject to Phosphoserine. The residue at position 661 (Lys661) is an N6-acetyllysine; alternate. A Glycyl lysine isopeptide (Lys-Gly) (interchain with G-Cter in ubiquitin); alternate cross-link involves residue Lys661. Lys667 participates in a covalent cross-link: Glycyl lysine isopeptide (Lys-Gly) (interchain with G-Cter in ubiquitin). Lys677 is modified (N6-acetyllysine; alternate). Residue Lys677 forms a Glycyl lysine isopeptide (Lys-Gly) (interchain with G-Cter in ubiquitin); alternate linkage. Tyr686 is modified (phosphotyrosine). Phosphoserine is present on Ser688. Positions 690–709 are disordered; that stretch reads VVSGDTSPRHLSNVSSTGSI. Ser692 is modified (phosphoserine; alternate). Ser692 carries an O-linked (GlcNAc...) serine; alternate glycan. Polar residues predominate over residues 693-708; sequence GDTSPRHLSNVSSTGS. Residue Thr695 is modified to Phosphothreonine. Phosphoserine occurs at positions 696, 701, 708, and 714. Position 719 is a phosphothreonine (Thr719).

In terms of assembly, interacts with MARK1, MARK2, MARK3 and MARK4. Interacts with SQSTM1 when polyubiquitinated. Interacts with PSMC2 through SQSTM1. Interacts with FKBP4. Binds to CSNK1D. Interacts with SGK1. Interacts with EPM2A; the interaction dephosphorylates MAPT at Ser-369. Interacts with PIN1. Interacts with LRRK2. Interacts with LRP1, leading to endocytosis; this interaction is reduced in the presence of LRPAP1/RAP. In terms of processing, polyubiquitinated. Requires functional TRAF6 and may provoke SQSTM1-dependent degradation by the proteasome. Phosphorylation at various serine and threonine residues in S-P or T-P motifs by proline-directed protein kinases (PDPK1, CDK1, CDK5, GSK3, MAPK) (a few sites per protein in interphase, more in mitosis), and at serine residues in K-X-G-S motifs by MAP/microtubule affinity-regulating kinase (MARK1, MARK2, MARK3, MARK4), causing detachment from microtubules, and their disassembly. Phosphorylated by PHK. Dephosphorylation at several serine and threonine residues by the serine/threonine phosphatase PPP5C. Phosphorylation at Ser-554 by BRSK1 and BRSK2 in neurons affects ability to bind microtubules and plays a role in neuron polarization. Phosphorylation at Ser-188 by SGK1 mediates microtubule depolymerization and neurite formation in hippocampal neurons. In terms of tissue distribution, expressed in neurons and at a lower level in the liver and kidney. Isoform PNS-tau is expressed in the peripheral nervous system while the others are expressed in the central nervous system.

The protein resides in the cytoplasm. It localises to the cytosol. The protein localises to the cell membrane. It is found in the cytoskeleton. Its subcellular location is the cell projection. The protein resides in the axon. It localises to the dendrite. The protein localises to the secreted. Its function is as follows. Promotes microtubule assembly and stability, and might be involved in the establishment and maintenance of neuronal polarity. The C-terminus binds axonal microtubules while the N-terminus binds neural plasma membrane components, suggesting that tau functions as a linker protein between both. Axonal polarity is predetermined by tau localization (in the neuronal cell) in the domain of the cell body defined by the centrosome. The short isoforms allow plasticity of the cytoskeleton whereas the longer isoforms may preferentially play a role in its stabilization. The protein is Microtubule-associated protein tau of Mus musculus (Mouse).